Reading from the N-terminus, the 590-residue chain is Multidrug resistance-like ATP-binding protein MdlA (590 aa).

The ABC transmembrane type-1 domain occupies 18–303; that stretch reads YLGAVALLVI…LAWMFNIVER (286 aa). A run of 6 helical transmembrane segments spans residues 23-43, 53-73, 134-154, 155-175, 248-268, and 280-300; these read ALLVIIAMLQLVPPKVVGIVV, TGQILMWIATMVLIAVVVYLL, GVLTLVDSLVMGCAVLIMMST, QISWQLTLFSLLPMPVMAIMI, IYIAIGMANLLAIGGGSWMVV, and FMMYLGLMIWPMLALAWMFNI. Residues 337 to 570 form the ABC transporter domain; sequence VNIHQFTYPQ…SGWYRDMYRY (234 aa). 369–376 lines the ATP pocket; that stretch reads GPTGSGKS.

This sequence belongs to the ABC transporter superfamily. Drug exporter-2 (TC 3.A.1.117) family.

It is found in the cell inner membrane. The catalysed reaction is ATP + H2O + xenobioticSide 1 = ADP + phosphate + xenobioticSide 2.. The sequence is that of Multidrug resistance-like ATP-binding protein MdlA (mdlA) from Escherichia coli (strain K12).